The sequence spans 227 residues: Cytochrome c oxidase subunit 2 (227 aa).

The Mitochondrial intermembrane segment spans residues 1 to 14; that stretch reads MAYPFQLGLQDATS. The helical transmembrane segment at 15-45 threads the bilayer; sequence PIMEELLHFHDHTLMIVFLISSLVLYIITLM. Residues 46–59 are Mitochondrial matrix-facing; sequence LTTKLTHTSTMDAQ. Residues 60 to 87 form a helical membrane-spanning segment; the sequence is EVETVWTILPAIILVLIALPSLRILYMM. Over 88-227 the chain is Mitochondrial intermembrane; the sequence is DEINNPSLTV…YFETWSALMV (140 aa). Positions 161, 196, 198, 200, 204, and 207 each coordinate Cu cation. Glutamate 198 is a binding site for Mg(2+). Phosphotyrosine is present on tyrosine 218.

It belongs to the cytochrome c oxidase subunit 2 family. Component of the cytochrome c oxidase (complex IV, CIV), a multisubunit enzyme composed of 14 subunits. The complex is composed of a catalytic core of 3 subunits MT-CO1, MT-CO2 and MT-CO3, encoded in the mitochondrial DNA, and 11 supernumerary subunits COX4I, COX5A, COX5B, COX6A, COX6B, COX6C, COX7A, COX7B, COX7C, COX8 and NDUFA4, which are encoded in the nuclear genome. The complex exists as a monomer or a dimer and forms supercomplexes (SCs) in the inner mitochondrial membrane with NADH-ubiquinone oxidoreductase (complex I, CI) and ubiquinol-cytochrome c oxidoreductase (cytochrome b-c1 complex, complex III, CIII), resulting in different assemblies (supercomplex SCI(1)III(2)IV(1) and megacomplex MCI(2)III(2)IV(2)). Found in a complex with TMEM177, COA6, COX18, COX20, SCO1 and SCO2. Interacts with TMEM177 in a COX20-dependent manner. Interacts with COX20. Interacts with COX16. Cu cation serves as cofactor.

The protein localises to the mitochondrion inner membrane. The enzyme catalyses 4 Fe(II)-[cytochrome c] + O2 + 8 H(+)(in) = 4 Fe(III)-[cytochrome c] + 2 H2O + 4 H(+)(out). Its function is as follows. Component of the cytochrome c oxidase, the last enzyme in the mitochondrial electron transport chain which drives oxidative phosphorylation. The respiratory chain contains 3 multisubunit complexes succinate dehydrogenase (complex II, CII), ubiquinol-cytochrome c oxidoreductase (cytochrome b-c1 complex, complex III, CIII) and cytochrome c oxidase (complex IV, CIV), that cooperate to transfer electrons derived from NADH and succinate to molecular oxygen, creating an electrochemical gradient over the inner membrane that drives transmembrane transport and the ATP synthase. Cytochrome c oxidase is the component of the respiratory chain that catalyzes the reduction of oxygen to water. Electrons originating from reduced cytochrome c in the intermembrane space (IMS) are transferred via the dinuclear copper A center (CU(A)) of subunit 2 and heme A of subunit 1 to the active site in subunit 1, a binuclear center (BNC) formed by heme A3 and copper B (CU(B)). The BNC reduces molecular oxygen to 2 water molecules using 4 electrons from cytochrome c in the IMS and 4 protons from the mitochondrial matrix. This chain is Cytochrome c oxidase subunit 2 (MT-CO2), found in Vulpes zerda (Fennec fox).